We begin with the raw amino-acid sequence, 79 residues long: Conotoxin 1 (79 aa).

The N-terminal stretch at 1–22 is a signal peptide; the sequence is MKLTCVLIITVLFLTASQLITA. Positions 23–46 are excised as a propeptide; the sequence is DYSRDQRQYRAVRLGDEMRTFKGA. Intrachain disulfides connect Cys-49–Cys-62, Cys-56–Cys-67, and Cys-61–Cys-77.

This sequence belongs to the conotoxin O1 superfamily. In terms of tissue distribution, expressed by the venom duct.

The protein localises to the secreted. This chain is Conotoxin 1, found in Conus vexillum (Flag cone).